Consider the following 303-residue polypeptide: Glucose-1-phosphate thymidylyltransferase (303 aa).

The Mg(2+) site is built by Asp108 and Asp222.

Belongs to the glucose-1-phosphate thymidylyltransferase family. It depends on Mg(2+) as a cofactor.

The enzyme catalyses dTTP + alpha-D-glucose 1-phosphate + H(+) = dTDP-alpha-D-glucose + diphosphate. Catalyzes the formation of dTDP-glucose, from dTTP and glucose 1-phosphate, as well as its pyrophosphorolysis. Its function is as follows. Probably involved in the biosynthesis of the acarviose moiety of the alpha-glucosidase inhibitor acarbose. This Actinoplanes sp. (strain ATCC 31044 / CBS 674.73 / SE50/110) protein is Glucose-1-phosphate thymidylyltransferase (acbA).